Reading from the N-terminus, the 326-residue chain is Vitamin B12 import system permease protein BtuC (326 aa).

9 consecutive transmembrane segments (helical) span residues 19–39 (LSVL…LWIL), 61–81 (LAVL…QALF), 88–108 (PGLL…VLLG), 112–132 (LPNW…TLIL), 146–166 (LLAG…AIYF), 184–204 (GGVD…LLWI), 240–260 (GWMV…GLVI), 274–294 (VLLP…DIVA), and 302–322 (ELPI…WLLL).

It belongs to the binding-protein-dependent transport system permease family. FecCD subfamily. In terms of assembly, the complex is composed of two ATP-binding proteins (BtuD), two transmembrane proteins (BtuC) and a solute-binding protein (BtuF).

The protein localises to the cell inner membrane. Its function is as follows. Part of the ABC transporter complex BtuCDF involved in vitamin B12 import. Involved in the translocation of the substrate across the membrane. This chain is Vitamin B12 import system permease protein BtuC, found in Escherichia coli O6:K15:H31 (strain 536 / UPEC).